Consider the following 413-residue polypeptide: MTPSISWSLLLLAGLCCLVPSFLAEDVQETDTSQKDQSPASHEIATNLGDFALRLYRELVHQSNTSNIFFSPVSIATAFAMLSLGSKGDTHTQILEGLQFNLTQTSEADIHKSFQHLLQTLNRPDSELQLSTGNGLFVNNDLKLVEKFLEEAKNHYQAEVFSVNFAESEEAKKVINDFVEKGTQGKIVEAVKKLDQDTVFALANYILFKGKWKQPFDPENTEEAEFHVDESTTVKVPMMTLSGMLDVHHCSMLSSWVLLMDYAGNTTAVFLLPDDGKMQHLEQTLNKELISQFLLNRRRSDAQIHIPRLSISGNYNLKTLMSPLGITRIFNNGADLSGITEENAPLKLSKAVHKAVLTIDETGTEAAAATVLQVATYSMPPIVRFDHPFLFIIFEEHTQSPIFVGKVVDPTHK.

A signal peptide spans 1–24; it reads MTPSISWSLLLLAGLCCLVPSFLA. N-linked (GlcNAc...) asparagine glycans are attached at residues Asn64, Asn101, and Asn265. The tract at residues 368–387 is RCL; sequence AATVLQVATYSMPPIVRFDH.

This sequence belongs to the serpin family.

Its subcellular location is the secreted. Functionally, inhibitor of serine proteases. Can inhibit trypsin and chymotrypsin; relatively ineffective against elastase. This is Alpha-1-antitrypsin 1-4 (Serpina1d) from Mus musculus (Mouse).